Here is a 696-residue protein sequence, read N- to C-terminus: uncharacterized protein (696 aa).

Helical transmembrane passes span 38–58 (IISI…NALA), 107–127 (LIYV…GYVV), 215–235 (AMAS…IFAL), 245–265 (SLFT…VVAL), 292–312 (TLPF…LIYL), 329–349 (VFFV…ILGE), 380–400 (FWVT…LTSA), 402–422 (FGAA…ACIG), 433–453 (FPSL…FLSS), and 457–477 (LVVA…IALP). CBS domains follow at residues 527 to 587 (RSPE…PMSS) and 617 to 674 (IHPT…THTG).

This sequence belongs to the chloride channel (TC 2.A.49) family.

Its subcellular location is the membrane. Its function is as follows. Voltage-gated chloride channel. This is an uncharacterized protein from Schizosaccharomyces pombe (strain 972 / ATCC 24843) (Fission yeast).